Here is a 195-residue protein sequence, read N- to C-terminus: HTH-type transcriptional regulator BetI (195 aa).

An HTH tetR-type domain is found at 8–68; the sequence is PIRRQQLIEA…ATMRYLISHL (61 aa). Residues 31 to 50 constitute a DNA-binding region (H-T-H motif); it reads SIVQIARRAGVSNGIISHYF.

The protein operates within amine and polyamine biosynthesis; betaine biosynthesis via choline pathway [regulation]. Its function is as follows. Repressor involved in the biosynthesis of the osmoprotectant glycine betaine. It represses transcription of the choline transporter BetT and the genes of BetAB involved in the synthesis of glycine betaine. The protein is HTH-type transcriptional regulator BetI of Pectobacterium carotovorum subsp. carotovorum (strain PC1).